The chain runs to 349 residues: Rhodopsin (349 aa).

The Extracellular portion of the chain corresponds to 1–33; it reads TEGPYFYIPMSNATGVVRSPYEYPQYYLVYPAA. Asparagine 12 carries an N-linked (GlcNAc...) asparagine glycan. A helical transmembrane segment spans residues 34 to 58; it reads FAVLGAYMFFLIIFGFPVNFLTLYV. The Cytoplasmic portion of the chain corresponds to 59–70; sequence TIEHKKLRTPLN. A helical transmembrane segment spans residues 71 to 93; sequence YILLNLAVADLFMVIGGFTTTIY. Residues 94-107 lie on the Extracellular side of the membrane; the sequence is TSMHGYFVLGRLGC. A disulfide bridge connects residues cysteine 107 and cysteine 184. The chain crosses the membrane as a helical span at residues 108 to 130; the sequence is NLEGFSATLGGMISLWSLVVLAV. The 'Ionic lock' involved in activated form stabilization signature appears at 131–133; the sequence is ERW. At 131–149 the chain is on the cytoplasmic side; sequence ERWVVVCKPMSNFRFGENH. A helical membrane pass occupies residues 150–170; it reads AIMGVTLTWAMGLACTVPPLV. Over 171–199 the chain is Extracellular; it reads GWSRYIPEGMQCSCGIDYYTRAEGFNNES. An N-linked (GlcNAc...) asparagine glycan is attached at asparagine 197. A helical transmembrane segment spans residues 200-221; that stretch reads FVLYMFVCHFSFPLVVIFFCYG. The Cytoplasmic portion of the chain corresponds to 222–249; that stretch reads RLLCAVKEAAAAQQESETTQRAEREVTR. A helical membrane pass occupies residues 250–271; the sequence is MVILMVIGFLVCWLPYASVAWY. Over 272-283 the chain is Extracellular; the sequence is IFTHQGSEFGPL. Residues 284–305 form a helical membrane-spanning segment; sequence FMTIPAFFAKSSAIYNPVIYIC. Lysine 293 carries the N6-(retinylidene)lysine modification. Over 306–349 the chain is Cytoplasmic; sequence LNKQFRQCMLTTLFCGKNPFEEEEGASSTKTEASSASSSSVSPA. Cysteine 320 carries the S-palmitoyl cysteine lipid modification. Positions 326–349 are disordered; that stretch reads EEEEGASSTKTEASSASSSSVSPA. Residues 331-349 show a composition bias toward low complexity; it reads ASSTKTEASSASSSSVSPA.

It belongs to the G-protein coupled receptor 1 family. Opsin subfamily. Post-translationally, phosphorylated on some or all of the serine and threonine residues present in the C-terminal region. In terms of processing, contains one covalently linked retinal chromophore.

It localises to the membrane. The protein localises to the cell projection. The protein resides in the cilium. Its subcellular location is the photoreceptor outer segment. Photoreceptor required for image-forming vision at low light intensity. While most salt water fish species use retinal as chromophore, most freshwater fish use 3-dehydroretinal, or a mixture of retinal and 3-dehydroretinal. Light-induced isomerization of 11-cis to all-trans retinal triggers a conformational change that activates signaling via G-proteins. Subsequent receptor phosphorylation mediates displacement of the bound G-protein alpha subunit by arrestin and terminates signaling. This Myripristis berndti (Bigscale soldierfish) protein is Rhodopsin (rho).